A 323-amino-acid polypeptide reads, in one-letter code: Mitochondrial glutamate carrier 1 (323 aa).

Solcar repeat units follow at residues 6 to 93 (ISLP…FRHQ), 101 to 214 (LTLP…LNQL), and 223 to 312 (SPFY…GIAE). The next 6 membrane-spanning stretches (helical) occupy residues 12–32 (LING…IDLA), 62–82 (YFGM…EKAI), 107–127 (MLAG…MEML), 189–209 (GLGA…PLFA), 223–243 (SPFY…AVAV), and 292–312 (ALVI…GIAE).

Belongs to the mitochondrial carrier (TC 2.A.29) family.

The protein localises to the mitochondrion inner membrane. It carries out the reaction L-glutamate(in) + H(+)(in) = L-glutamate(out) + H(+)(out). In terms of biological role, mitochondrial glutamate/H(+) symporter. Responsible for the transport of glutamate from the cytosol into the mitochondrial matrix with the concomitant import of a proton. Plays a role in the control of glucose-stimulated insulin secretion. The sequence is that of Mitochondrial glutamate carrier 1 (Slc25a22) from Mus musculus (Mouse).